Here is a 554-residue protein sequence, read N- to C-terminus: Probable pectinesterase/pectinesterase inhibitor 6 (554 aa).

Positions 1 to 32 (MDHKILLTPPKSLYTKCIITIIYVVSISHLNA) are cleaved as a signal peptide. The tract at residues 29 to 183 (HLNAHFITSC…TKSISNSLAV (155 aa)) is pectinesterase inhibitor 6. Residues asparagine 119 and asparagine 172 are each glycosylated (N-linked (GlcNAc...) asparagine). Positions 250–540 (DLVVAKDGSG…FTVENFLDGN (291 aa)) are pectinesterase 6. Substrate is bound by residues threonine 327 and glutamine 357. Aspartate 380 serves as the catalytic Proton donor; for pectinesterase activity. Cysteine 394 and cysteine 414 are oxidised to a cystine. The active-site Nucleophile; for pectinesterase activity is aspartate 401. Substrate-binding residues include arginine 460 and tryptophan 462.

In the N-terminal section; belongs to the PMEI family. This sequence in the C-terminal section; belongs to the pectinesterase family. Expressed in rosette leaves, flower and siliques.

It localises to the secreted. The protein localises to the cell wall. The catalysed reaction is [(1-&gt;4)-alpha-D-galacturonosyl methyl ester](n) + n H2O = [(1-&gt;4)-alpha-D-galacturonosyl](n) + n methanol + n H(+). It participates in glycan metabolism; pectin degradation; 2-dehydro-3-deoxy-D-gluconate from pectin: step 1/5. Functionally, acts in the modification of cell walls via demethylesterification of cell wall pectin. This chain is Probable pectinesterase/pectinesterase inhibitor 6 (PME6), found in Arabidopsis thaliana (Mouse-ear cress).